The primary structure comprises 805 residues: Phenylalanine--tRNA ligase beta subunit (805 aa).

The 110-residue stretch at 39–148 (APPFTGVVVA…AALRPGTDIR (110 aa)) folds into the tRNA-binding domain. One can recognise a B5 domain in the interval 399 to 474 (PVREPVRMRL…RVYGFERIPD (76 aa)). 4 residues coordinate Mg(2+): aspartate 452, aspartate 458, glutamate 461, and glutamate 462. One can recognise an FDX-ACB domain in the interval 703–804 (SRQPAVVRDL…LVAAHNARQR (102 aa)).

Belongs to the phenylalanyl-tRNA synthetase beta subunit family. Type 1 subfamily. In terms of assembly, tetramer of two alpha and two beta subunits. The cofactor is Mg(2+).

Its subcellular location is the cytoplasm. It carries out the reaction tRNA(Phe) + L-phenylalanine + ATP = L-phenylalanyl-tRNA(Phe) + AMP + diphosphate + H(+). This is Phenylalanine--tRNA ligase beta subunit from Bordetella bronchiseptica (strain ATCC BAA-588 / NCTC 13252 / RB50) (Alcaligenes bronchisepticus).